The following is a 580-amino-acid chain: Alpha-glucosidase (580 aa).

A signal peptide spans 1–19; that stretch reads MRPLGALSLFALLATTVSG. N-linked (GlcNAc...) asparagine glycosylation is found at asparagine 102 and asparagine 127. The Nucleophile role is filled by aspartate 224. Catalysis depends on glutamate 290, which acts as the Proton donor. Asparagine 501 carries N-linked (GlcNAc...) asparagine glycosylation. Residues 560 to 580 form a helical membrane-spanning segment; sequence AAAINLSIGLLLAIMARYIFV.

Belongs to the glycosyl hydrolase 13 family. (Microbial infection) Binds to L.sphaericus BinB subunit of the binary toxin BinAB. In 4th-instar larvae produced in the brush border membranes of the gastric caeca and the posterior stomach cells (at protein level).

It localises to the membrane. It carries out the reaction Hydrolysis of terminal, non-reducing (1-&gt;4)-linked alpha-D-glucose residues with release of alpha-D-glucose.. Probably an alpha-glucosidase, it has no alpha-amylase function. In terms of biological role, (Microbial infection) Serves as the larval receptor for Lysinibacillus sphaericus BinB toxin. The protein is Alpha-glucosidase of Culex pipiens (House mosquito).